The following is a 484-amino-acid chain: Bifunctional protein GlmU (484 aa).

Positions 1–240 (MSNPHSSAVI…HRELAGVNDR (240 aa)) are pyrophosphorylase. UDP-N-acetyl-alpha-D-glucosamine contacts are provided by residues 12–15 (LAAG), K26, Q83, and 88–89 (GT). D113 contacts Mg(2+). Positions 150, 165, 180, and 238 each coordinate UDP-N-acetyl-alpha-D-glucosamine. N238 is a Mg(2+) binding site. Residues 241–261 (VQLAQAGKILNQRLVEDAMRN) are linker. Residues 262 to 484 (GATIVDPDTT…QAHAHETKEG (223 aa)) form an N-acetyltransferase region. UDP-N-acetyl-alpha-D-glucosamine contacts are provided by R343 and K361. The active-site Proton acceptor is H373. UDP-N-acetyl-alpha-D-glucosamine contacts are provided by Y376 and N387. Residues A390, 396–397 (NY), S415, and A433 each bind acetyl-CoA. The interval 461 to 484 (EKNRPGTPAADAARQAHAHETKEG) is disordered.

This sequence in the N-terminal section; belongs to the N-acetylglucosamine-1-phosphate uridyltransferase family. It in the C-terminal section; belongs to the transferase hexapeptide repeat family. As to quaternary structure, homotrimer. Mg(2+) serves as cofactor.

The protein localises to the cytoplasm. It carries out the reaction alpha-D-glucosamine 1-phosphate + acetyl-CoA = N-acetyl-alpha-D-glucosamine 1-phosphate + CoA + H(+). The catalysed reaction is N-acetyl-alpha-D-glucosamine 1-phosphate + UTP + H(+) = UDP-N-acetyl-alpha-D-glucosamine + diphosphate. The protein operates within nucleotide-sugar biosynthesis; UDP-N-acetyl-alpha-D-glucosamine biosynthesis; N-acetyl-alpha-D-glucosamine 1-phosphate from alpha-D-glucosamine 6-phosphate (route II): step 2/2. It participates in nucleotide-sugar biosynthesis; UDP-N-acetyl-alpha-D-glucosamine biosynthesis; UDP-N-acetyl-alpha-D-glucosamine from N-acetyl-alpha-D-glucosamine 1-phosphate: step 1/1. Its pathway is bacterial outer membrane biogenesis; LPS lipid A biosynthesis. Catalyzes the last two sequential reactions in the de novo biosynthetic pathway for UDP-N-acetylglucosamine (UDP-GlcNAc). The C-terminal domain catalyzes the transfer of acetyl group from acetyl coenzyme A to glucosamine-1-phosphate (GlcN-1-P) to produce N-acetylglucosamine-1-phosphate (GlcNAc-1-P), which is converted into UDP-GlcNAc by the transfer of uridine 5-monophosphate (from uridine 5-triphosphate), a reaction catalyzed by the N-terminal domain. This Corynebacterium diphtheriae (strain ATCC 700971 / NCTC 13129 / Biotype gravis) protein is Bifunctional protein GlmU.